Reading from the N-terminus, the 847-residue chain is Collagen alpha-1(I) chain (847 aa).

The tract at residues 1 to 847 (GPMGPSGPRG…PGPIGPPGPR (847 aa)) is disordered. The segment covering 20–39 (PQGFQGPPGEPGEPGSSGPM) has biased composition (low complexity). Basic and acidic residues predominate over residues 51 to 65 (NGDDGEAGKPGRPGE). A Phosphoserine modification is found at S85. Composition is skewed to low complexity over residues 93–109 (DAGP…PGEN) and 127–145 (PGAS…TGAA). Over residues 147-159 (PPGPTGPAGPPGF) the composition is skewed to pro residues. 7 stretches are compositionally biased toward low complexity: residues 193–208 (AGAA…DGQP), 219–228 (QGPSGAPGPK), 298–314 (PKGI…DGKT), 334–343 (PGPKGAAGEP), 500–543 (PSGP…KGDA), 551–599 (PTGA…NAGA), and 628–638 (SPGADGPAGAP). Residue S501 is modified to Phosphoserine. Positions 685-695 (PPGPMGPPGIA) are enriched in pro residues. A compositionally biased stretch (low complexity) spans 697–712 (PPGESGREGSPGAEGS). A compositionally biased stretch (pro residues) spans 731 to 746 (SGPPGAPGAPGAPGPV). Residues 763 to 777 (AGPAGARGPSGPQGP) show a composition bias toward low complexity. Residues 778–789 (RGDKGETGEQGD) are compositionally biased toward basic and acidic residues. Low complexity predominate over residues 793–838 (SGIQGPPGAPGSPGEQGPSGASGPAGPRGPPGSAGSPGKDGINGIP).

It belongs to the fibrillar collagen family. Trimers of one alpha 2(I) and two alpha 1(I) chains. Post-translationally, prolines at the third position of the tripeptide repeating unit (G-X-Y) are hydroxylated in some or all of the chains. As to expression, forms the fibrils of tendon, ligaments and bones. In bones, the fibrils are mineralized with calcium hydroxyapatite.

It is found in the secreted. It localises to the extracellular space. The protein resides in the extracellular matrix. Its function is as follows. Type I collagen is a member of group I collagen (fibrillar forming collagen). The protein is Collagen alpha-1(I) chain of Cyclopes didactylus (Silky anteater).